A 390-amino-acid polypeptide reads, in one-letter code: Queuine tRNA-ribosyltransferase (390 aa).

The active-site Proton acceptor is the Asp-92. Substrate-binding positions include 92–96, Asp-146, Gln-195, and Gly-222; that span reads DSGGF. The segment at 253–259 is RNA binding; sequence GVGTPED. The Nucleophile role is filled by Asp-272. The RNA binding; important for wobble base 34 recognition stretch occupies residues 277-281; that stretch reads TRNAR. Cys-310, Cys-312, Cys-315, and His-354 together coordinate Zn(2+).

It belongs to the queuine tRNA-ribosyltransferase family. Homodimer. Within each dimer, one monomer is responsible for RNA recognition and catalysis, while the other monomer binds to the replacement base PreQ1. Zn(2+) is required as a cofactor.

The enzyme catalyses 7-aminomethyl-7-carbaguanine + guanosine(34) in tRNA = 7-aminomethyl-7-carbaguanosine(34) in tRNA + guanine. It participates in tRNA modification; tRNA-queuosine biosynthesis. Catalyzes the base-exchange of a guanine (G) residue with the queuine precursor 7-aminomethyl-7-deazaguanine (PreQ1) at position 34 (anticodon wobble position) in tRNAs with GU(N) anticodons (tRNA-Asp, -Asn, -His and -Tyr). Catalysis occurs through a double-displacement mechanism. The nucleophile active site attacks the C1' of nucleotide 34 to detach the guanine base from the RNA, forming a covalent enzyme-RNA intermediate. The proton acceptor active site deprotonates the incoming PreQ1, allowing a nucleophilic attack on the C1' of the ribose to form the product. After dissociation, two additional enzymatic reactions on the tRNA convert PreQ1 to queuine (Q), resulting in the hypermodified nucleoside queuosine (7-(((4,5-cis-dihydroxy-2-cyclopenten-1-yl)amino)methyl)-7-deazaguanosine). The polypeptide is Queuine tRNA-ribosyltransferase (Acidovorax sp. (strain JS42)).